A 252-amino-acid polypeptide reads, in one-letter code: Floral homeotic protein AGAMOUS (252 aa).

Residues 1 to 20 (MAYQSELGGDSSPLRKSGRG) form a disordered region. One can recognise an MADS-box domain in the interval 19 to 73 (RGKIEIKRIENTTNRQVTFCKRRNGLLKKAYELSVLCDAEVALIVFSSRGRLYEY). Residues 99–166 (AEINAQYYQQ…KKNELLFSEI (68 aa)) are a coiled coil. The K-box domain maps to 103-193 (AQYYQQESAK…RAKIAENERN (91 aa)).

As to quaternary structure, homodimer, capable of binding to CArG-box sequences. Forms a heterodimer via the K-box domain with either SEPALATTA1/AGL2, SEPALATTA2/AGL4, SEPALLATA3/AGL9 or AGL6. Heterodimerization also seen with some other Agamous-like MADS-box proteins. Interacts with AGL15 and AGL16. Component of a complex made of FLOR1, VSP1 and AGAMOUS (AG). Binds directly with FLR1. Detected early in the floral meristem but mostly expressed in stamen and carpel primordia.

It localises to the nucleus. In terms of biological role, probable transcription factor involved in the control of organ identity during the early development of flowers. Is required for normal development of stamens and carpels in the wild-type flower. Plays a role in maintaining the determinacy of the floral meristem. Acts as C class cadastral protein by repressing the A class floral homeotic genes like APETALA1. Forms a heterodimer via the K-box domain with either SEPALATTA1/AGL2, SEPALATTA2/AGL4, SEPALLATA3/AGL9 or AGL6 that could be involved in genes regulation during floral meristem development. Controls AHL21/GIK, a multifunctional chromatin modifier in reproductive organ patterning and differentiation. Induces microsporogenesis through the activation of SPL/NZZ. The protein is Floral homeotic protein AGAMOUS (AG) of Arabidopsis thaliana (Mouse-ear cress).